Here is a 652-residue protein sequence, read N- to C-terminus: WD repeat-containing protein 70 (652 aa).

Disordered stretches follow at residues 1–22 (MERP…LAVT) and 45–171 (RRTA…IPDS). A compositionally biased stretch (basic and acidic residues) spans 45–76 (RRTAVERSRKTLEAREREEEMNREKELRRQNE). A compositionally biased stretch (low complexity) spans 92 to 102 (SKSSSRDTSSS). 2 stretches are compositionally biased toward acidic residues: residues 103 to 115 (ESDE…DDEL) and 146 to 162 (EDVE…EEEE). 7 WD repeats span residues 178 to 217 (HGTK…ASFK), 225 to 266 (CECH…ECIK), 279 to 319 (GHTA…KQKS), 328 to 367 (GKKV…HPKF), 374 to 413 (DPGT…KPLF), 419 to 464 (PTMF…RVYE), and 467 to 506 (ITDA…QRGA). A Glycyl lysine isopeptide (Lys-Gly) (interchain with G-Cter in SUMO2) cross-link involves residue lysine 294. Position 450 is an N6-acetyllysine (lysine 450). Residues 538–563 (REPRQRSTRKQLEKDRLDPLKSHKPE) show a composition bias toward basic and acidic residues. Positions 538-577 (REPRQRSTRKQLEKDRLDPLKSHKPEPPVAGPGRGGRVGT) are disordered. At threonine 577 the chain carries Phosphothreonine. Glycyl lysine isopeptide (Lys-Gly) (interchain with G-Cter in SUMO2) cross-links involve residues lysine 588 and lysine 594. A phosphoserine mark is found at serine 619 and serine 636. The tract at residues 629–652 (TMFAQVESDDEETKNEPEWKKRKI) is disordered. Basic and acidic residues predominate over residues 642–652 (KNEPEWKKRKI).

It belongs to the WD repeat GAD-1 family.

The chain is WD repeat-containing protein 70 (WDR70) from Bos taurus (Bovine).